Here is a 165-residue protein sequence, read N- to C-terminus: Transcription antitermination protein NusB (165 aa).

This sequence belongs to the NusB family.

In terms of biological role, involved in transcription antitermination. Required for transcription of ribosomal RNA (rRNA) genes. Binds specifically to the boxA antiterminator sequence of the ribosomal RNA (rrn) operons. In Chlorobium phaeobacteroides (strain DSM 266 / SMG 266 / 2430), this protein is Transcription antitermination protein NusB.